A 323-amino-acid chain; its full sequence is Mycothiol acetyltransferase (323 aa).

2 consecutive N-acetyltransferase domains span residues 21–176 (ELLR…VSLR) and 173–323 (VSLR…LTKN). E44 is a binding site for 1D-myo-inositol 2-(L-cysteinylamino)-2-deoxy-alpha-D-glucopyranoside. 98–100 (LAV) contributes to the acetyl-CoA binding site. 3 residues coordinate 1D-myo-inositol 2-(L-cysteinylamino)-2-deoxy-alpha-D-glucopyranoside: E200, K240, and E253. Acetyl-CoA-binding positions include 257–259 (VGV) and 264–270 (QGLGLGK). Y291 is a 1D-myo-inositol 2-(L-cysteinylamino)-2-deoxy-alpha-D-glucopyranoside binding site.

This sequence belongs to the acetyltransferase family. MshD subfamily. In terms of assembly, monomer.

The enzyme catalyses 1D-myo-inositol 2-(L-cysteinylamino)-2-deoxy-alpha-D-glucopyranoside + acetyl-CoA = mycothiol + CoA + H(+). Its function is as follows. Catalyzes the transfer of acetyl from acetyl-CoA to desacetylmycothiol (Cys-GlcN-Ins) to form mycothiol. The protein is Mycothiol acetyltransferase of Paenarthrobacter aurescens (strain TC1).